A 186-amino-acid chain; its full sequence is uncharacterized protein (186 aa).

Belongs to the MG032/MG096/MG288 family.

This is an uncharacterized protein from Mycoplasma pneumoniae (strain ATCC 29342 / M129 / Subtype 1) (Mycoplasmoides pneumoniae).